Reading from the N-terminus, the 154-residue chain is MGYGKILVALDRSELAKEVLQQAIALGQKESSQLMVFYCIPVDSQDLSIYPSFYGEAAIGFSQIIKEHLEEQQTEAREWLQSIVQQVQEDGVACEWDVKVGEPGRWIRDMAKNWDADLVVLGRRGLKGLAEVFLGSVSSYVIHHVQCSVLIVQH.

Belongs to the universal stress protein A family.

The polypeptide is Universal stress protein Sll1388 (Synechocystis sp. (strain ATCC 27184 / PCC 6803 / Kazusa)).